The sequence spans 239 residues: Small ribosomal subunit protein uS3c (239 aa).

Residues 43 to 139 enclose the KH type-2 domain; the sequence is IKNYIQKNRK…RFNISIEKVK (97 aa). Residues 50–74 form a disordered region; sequence NRKKGSNRKIESDSSSEVITHNRKM.

The protein belongs to the universal ribosomal protein uS3 family. Part of the 30S ribosomal subunit.

Its subcellular location is the plastid. The protein resides in the chloroplast. The protein is Small ribosomal subunit protein uS3c (rps3) of Hordeum vulgare (Barley).